A 205-amino-acid chain; its full sequence is Ribosomal RNA small subunit methyltransferase G (205 aa).

Residues glycine 66, phenylalanine 71, 119-120 (IE), and arginine 135 contribute to the S-adenosyl-L-methionine site.

It belongs to the methyltransferase superfamily. RNA methyltransferase RsmG family.

The protein resides in the cytoplasm. The enzyme catalyses guanosine(527) in 16S rRNA + S-adenosyl-L-methionine = N(7)-methylguanosine(527) in 16S rRNA + S-adenosyl-L-homocysteine. Specifically methylates the N7 position of guanine in position 527 of 16S rRNA. This chain is Ribosomal RNA small subunit methyltransferase G, found in Rhizobium leguminosarum bv. trifolii (strain WSM2304).